Consider the following 124-residue polypeptide: Small ribosomal subunit protein uS12 (124 aa).

Disordered regions lie at residues 9–32 (RKGR…QRRG) and 105–124 (QGVK…KEKS). A compositionally biased stretch (basic residues) spans 108–118 (KNRKQARSRYG).

The protein belongs to the universal ribosomal protein uS12 family. As to quaternary structure, part of the 30S ribosomal subunit. Contacts proteins S8 and S17. May interact with IF1 in the 30S initiation complex.

Its function is as follows. With S4 and S5 plays an important role in translational accuracy. Interacts with and stabilizes bases of the 16S rRNA that are involved in tRNA selection in the A site and with the mRNA backbone. Located at the interface of the 30S and 50S subunits, it traverses the body of the 30S subunit contacting proteins on the other side and probably holding the rRNA structure together. The combined cluster of proteins S8, S12 and S17 appears to hold together the shoulder and platform of the 30S subunit. The protein is Small ribosomal subunit protein uS12 of Nocardia farcinica (strain IFM 10152).